Reading from the N-terminus, the 409-residue chain is Broad specificity amino-acid racemase (409 aa).

Residues 1–25 (MRLKKTLLSIAIAAATFTPAMHSIA) form the signal peptide. Cys-72 and Cys-98 are joined by a disulfide. The Proton acceptor role is filled by Lys-76. N6-(pyridoxal phosphate)lysine is present on Lys-76. Arg-175 is a binding site for substrate. Tyr-301 serves as the catalytic Proton acceptor. Residue Met-349 coordinates substrate.

The protein belongs to the alanine racemase family. Bsr subfamily. Requires pyridoxal 5'-phosphate as cofactor.

It is found in the periplasm. It carries out the reaction an L-alpha-amino acid = a D-alpha-amino acid. It catalyses the reaction L-lysine = D-lysine. The enzyme catalyses L-arginine = D-arginine. In terms of biological role, amino-acid racemase able to utilize a broad range of substrates. This is Broad specificity amino-acid racemase from Vibrio parahaemolyticus serotype O3:K6 (strain RIMD 2210633).